The chain runs to 445 residues: MKKVITLLALMAAAQIYAQGQECINLSENECHRNSSCVPVNFKKCCGDQQFACYEGDFNSCHYITKCYKSSKSLDVIESTNECYIPPAGYELFEPVSSCTNDELKHCSDQGKQCIFKRNDCPNPTSCCPGHGVCEDFNRSESGSGNKEQISTTGNTGPQTRGFTISGTGGTGSVPIDACTNVLCQQGEHCEVDQDGRAHCYVNIESIGTLPLGCLNVVCQPHQHCEIDKESGLAHCVLDINPIGFTTIDASSTVAGSSSTTGGSGGTGSNDICSNVHCPDNYHCEMRQDGKAQCVADINAIGFTTSGASTNGLIPPASTGWSDVCSNVICPPGYYCQKNEQTGKADCLNYSSSTTGGGTGSTTGSIDVCSNVICPPYFHCEKNDKGWAQCAADINAIGFSTSSTNGLVSTTGSNDVCQNVHCPQFFKCEKNENGLGECVSTLIPL.

The N-terminal stretch at 1–20 (MKKVITLLALMAAAQIYAQG) is a signal peptide. Residues 21-139 (QECINLSENE…GHGVCEDFNR (119 aa)) form the DSCP-N domain. A compositionally biased stretch (polar residues) spans 141-159 (ESGSGNKEQISTTGNTGPQ). The disordered stretch occupies residues 141-161 (ESGSGNKEQISTTGNTGPQTR). 6 consecutive Follistatin-like domains span residues 178 to 201 (ACTN…AHCY), 213 to 237 (GCLN…AHCV), 272 to 295 (ICSN…AQCV), 324 to 348 (VCSN…ADCL), 368 to 391 (VCSN…AQCA), and 416 to 439 (VCQN…GECV).

May contribute to the structure of the coat at the interface between the middle, cellulosic layer and the outer, electron-dense, proteinaceous layer. This Dictyostelium discoideum (Social amoeba) protein is Probable spore coat protein sigD (sigD).